The primary structure comprises 626 residues: Biosynthetic arginine decarboxylase (626 aa).

N6-(pyridoxal phosphate)lysine is present on K99. Residue V279–Y289 participates in substrate binding.

This sequence belongs to the Orn/Lys/Arg decarboxylase class-II family. SpeA subfamily. Mg(2+) is required as a cofactor. The cofactor is pyridoxal 5'-phosphate.

It carries out the reaction L-arginine + H(+) = agmatine + CO2. It functions in the pathway amine and polyamine biosynthesis; agmatine biosynthesis; agmatine from L-arginine: step 1/1. Catalyzes the biosynthesis of agmatine from arginine. The chain is Biosynthetic arginine decarboxylase from Chromobacterium violaceum (strain ATCC 12472 / DSM 30191 / JCM 1249 / CCUG 213 / NBRC 12614 / NCIMB 9131 / NCTC 9757 / MK).